The primary structure comprises 415 residues: uncharacterized protein (415 aa).

Helical transmembrane passes span 20–40 (MAYL…FGIL), 43–63 (LMPI…PAIA), 78–98 (IPIL…TPYI), 109–129 (LPNI…VIAF), 155–175 (VILV…LSIS), 243–263 (IVIM…SSLI), 300–320 (IFSS…LIAF), 328–348 (GILC…YTLI), 360–380 (ISFY…LILV), and 388–408 (GSLA…FAIL).

The protein belongs to the polysaccharide synthase family.

It localises to the cell membrane. This is an uncharacterized protein from Methanocaldococcus jannaschii (strain ATCC 43067 / DSM 2661 / JAL-1 / JCM 10045 / NBRC 100440) (Methanococcus jannaschii).